The following is a 333-amino-acid chain: Holliday junction branch migration complex subunit RuvB (333 aa).

The tract at residues 1-182 (MEERMVSAEA…FGVMARLEYY (182 aa)) is large ATPase domain (RuvB-L). ATP-binding positions include Ile21, Arg22, Gly63, Lys66, Thr67, Thr68, 129 to 131 (EDY), Arg172, Tyr182, and Arg219. A Mg(2+)-binding site is contributed by Thr67. The interval 183-253 (NVEELTTIIE…RAIESLERLQ (71 aa)) is small ATPAse domain (RuvB-S). The head domain (RuvB-H) stretch occupies residues 256–333 (RLGLDHIDHK…EHFNMEVPNK (78 aa)). Arg311 and Arg316 together coordinate DNA.

This sequence belongs to the RuvB family. As to quaternary structure, homohexamer. Forms an RuvA(8)-RuvB(12)-Holliday junction (HJ) complex. HJ DNA is sandwiched between 2 RuvA tetramers; dsDNA enters through RuvA and exits via RuvB. An RuvB hexamer assembles on each DNA strand where it exits the tetramer. Each RuvB hexamer is contacted by two RuvA subunits (via domain III) on 2 adjacent RuvB subunits; this complex drives branch migration. In the full resolvosome a probable DNA-RuvA(4)-RuvB(12)-RuvC(2) complex forms which resolves the HJ.

The protein localises to the cytoplasm. The catalysed reaction is ATP + H2O = ADP + phosphate + H(+). Its function is as follows. The RuvA-RuvB-RuvC complex processes Holliday junction (HJ) DNA during genetic recombination and DNA repair, while the RuvA-RuvB complex plays an important role in the rescue of blocked DNA replication forks via replication fork reversal (RFR). RuvA specifically binds to HJ cruciform DNA, conferring on it an open structure. The RuvB hexamer acts as an ATP-dependent pump, pulling dsDNA into and through the RuvAB complex. RuvB forms 2 homohexamers on either side of HJ DNA bound by 1 or 2 RuvA tetramers; 4 subunits per hexamer contact DNA at a time. Coordinated motions by a converter formed by DNA-disengaged RuvB subunits stimulates ATP hydrolysis and nucleotide exchange. Immobilization of the converter enables RuvB to convert the ATP-contained energy into a lever motion, pulling 2 nucleotides of DNA out of the RuvA tetramer per ATP hydrolyzed, thus driving DNA branch migration. The RuvB motors rotate together with the DNA substrate, which together with the progressing nucleotide cycle form the mechanistic basis for DNA recombination by continuous HJ branch migration. Branch migration allows RuvC to scan DNA until it finds its consensus sequence, where it cleaves and resolves cruciform DNA. The protein is Holliday junction branch migration complex subunit RuvB of Halalkalibacterium halodurans (strain ATCC BAA-125 / DSM 18197 / FERM 7344 / JCM 9153 / C-125) (Bacillus halodurans).